Here is an 887-residue protein sequence, read N- to C-terminus: Pyruvate dehydrogenase E1 component (887 aa).

Homodimer. Part of the PDH complex, consisting of multiple copies of pyruvate dehydrogenase (E1), dihydrolipoamide acetyltransferase (E2) and lipoamide dehydrogenase (E3). Requires thiamine diphosphate as cofactor.

It carries out the reaction N(6)-[(R)-lipoyl]-L-lysyl-[protein] + pyruvate + H(+) = N(6)-[(R)-S(8)-acetyldihydrolipoyl]-L-lysyl-[protein] + CO2. Its function is as follows. Component of the pyruvate dehydrogenase (PDH) complex, that catalyzes the overall conversion of pyruvate to acetyl-CoA and CO(2). The polypeptide is Pyruvate dehydrogenase E1 component (aceE) (Buchnera aphidicola subsp. Acyrthosiphon pisum (strain APS) (Acyrthosiphon pisum symbiotic bacterium)).